A 701-amino-acid polypeptide reads, in one-letter code: Reverse gyrase subunit A (701 aa).

Residues 41–197 enclose the Toprim domain; sequence MVLFIVESPN…NIYRAEFHEV (157 aa). E47 is a binding site for Mg(2+). The RG C-terminal-type zinc-finger motif lies at 117–143; it reads IKKCLDCGHQFVDEDKCPRCGSENIDD. Positions 120, 123, 133, and 136 each coordinate Zn(2+). Residue D166 participates in Mg(2+) binding. The Topo IA-type catalytic domain maps to 213 to 602; sequence NTNRVKAQLV…SFKKELIEIW (390 aa). Residue Y352 is the O-(5'-phospho-DNA)-tyrosine intermediate of the active site.

It belongs to the type IA topoisomerase family. As to quaternary structure, heterodimer of an RgyA and RgyB subunit. Requires Zn(2+) as cofactor. It depends on Mg(2+) as a cofactor.

The protein resides in the cytoplasm. Its function is as follows. Modifies the topological state of DNA by introducing positive supercoils in an ATP-dependent process. Binds to single-stranded DNA, transiently cleaves and then rejoins the end, introducing a positive supercoil in the process. The scissile phosphodiester is attacked by the catalytic tyrosine of the enzyme, resulting in the formation of a DNA-(5'-phosphotyrosyl)-enzyme intermediate. Probably involved in rewinding DNA strands in regions of the chromosome that have opened up to allow replication, transcription, DNA repair or for DNA protection. Reconstituted holoenzyme binds dsDNA a bit better than ssDNA, this subunit preferentially binds ssDNA. In isolation this subunit relaxes negatively-supercoiled DNA, and stimulates the endogenous ATPase activity of the RgyB subunit. The protein is Reverse gyrase subunit A of Nanoarchaeum equitans (strain Kin4-M).